Consider the following 151-residue polypeptide: Neuroglobin (151 aa).

Residues 1–149 (MELPEPELIR…VVQAMSRGWG (149 aa)) enclose the Globin domain. 2 residues coordinate heme b: His-64 and His-96.

This sequence belongs to the globin family. Monomer. Homodimer and homotetramer; disulfide-linked. Mainly monomeric but also detected as part of homodimers and homotetramers. Interacts with 14-3-3 proteins; regulates the phosphorylation of NGB. Could interact (ferrous form) with G-alpha(i) proteins (GTP-bound form). Phosphorylated during hypoxia by ERK1/ERK2. Phosphorylation regulates the heme pocket hexacoordination preventing the association of His-64 with the heme metal center. Thereby, promotes the access of dioxygen and nitrite to the heme and stimulates the nitrite reductase activity. Phosphorylation during hypoxia is stabilized by 14-3-3 proteins.

It localises to the cytoplasm. The protein localises to the cytosol. The protein resides in the mitochondrion matrix. It catalyses the reaction Fe(III)-heme b-[protein] + nitric oxide + H2O = Fe(II)-heme b-[protein] + nitrite + 2 H(+). Functionally, monomeric globin with a bis-histidyl six-coordinate heme-iron atom through which it can bind dioxygen, carbon monoxide and nitric oxide. Could help transport oxygen and increase its availability to the metabolically active neuronal tissues, though its low quantity in tissues as well as its high affinity for dioxygen, which may limit its oxygen-releasing ability, argue against it. The ferrous/deoxygenated form exhibits a nitrite reductase activity and it could produce nitric oxide which in turn inhibits cellular respiration in response to hypoxia. In its ferrous/deoxygenated state, it may also exhibit GDI (Guanine nucleotide Dissociation Inhibitor) activity toward heterotrimeric G-alpha proteins, thereby regulating signal transduction to facilitate neuroprotective responses in the wake of hypoxia and associated oxidative stress. The protein is Neuroglobin of Bos taurus (Bovine).